Here is a 379-residue protein sequence, read N- to C-terminus: Queuine tRNA-ribosyltransferase (379 aa).

The Proton acceptor role is filled by Asp94. Substrate is bound by residues 94–98 (DSGGF), Asp148, Gln191, and Gly218. The RNA binding stretch occupies residues 249 to 255 (GVGSPDA). The active-site Nucleophile is the Asp268. An RNA binding; important for wobble base 34 recognition region spans residues 273-277 (TRIAR). Residues Cys306, Cys308, Cys311, and His337 each contribute to the Zn(2+) site.

The protein belongs to the queuine tRNA-ribosyltransferase family. In terms of assembly, homodimer. Within each dimer, one monomer is responsible for RNA recognition and catalysis, while the other monomer binds to the replacement base PreQ1. Zn(2+) serves as cofactor.

It carries out the reaction 7-aminomethyl-7-carbaguanine + guanosine(34) in tRNA = 7-aminomethyl-7-carbaguanosine(34) in tRNA + guanine. Its pathway is tRNA modification; tRNA-queuosine biosynthesis. Functionally, catalyzes the base-exchange of a guanine (G) residue with the queuine precursor 7-aminomethyl-7-deazaguanine (PreQ1) at position 34 (anticodon wobble position) in tRNAs with GU(N) anticodons (tRNA-Asp, -Asn, -His and -Tyr). Catalysis occurs through a double-displacement mechanism. The nucleophile active site attacks the C1' of nucleotide 34 to detach the guanine base from the RNA, forming a covalent enzyme-RNA intermediate. The proton acceptor active site deprotonates the incoming PreQ1, allowing a nucleophilic attack on the C1' of the ribose to form the product. After dissociation, two additional enzymatic reactions on the tRNA convert PreQ1 to queuine (Q), resulting in the hypermodified nucleoside queuosine (7-(((4,5-cis-dihydroxy-2-cyclopenten-1-yl)amino)methyl)-7-deazaguanosine). The protein is Queuine tRNA-ribosyltransferase of Staphylococcus aureus (strain Mu3 / ATCC 700698).